Consider the following 96-residue polypeptide: Putative pterin-4-alpha-carbinolamine dehydratase (96 aa).

The protein belongs to the pterin-4-alpha-carbinolamine dehydratase family.

It carries out the reaction (4aS,6R)-4a-hydroxy-L-erythro-5,6,7,8-tetrahydrobiopterin = (6R)-L-erythro-6,7-dihydrobiopterin + H2O. In Prochlorococcus marinus subsp. pastoris (strain CCMP1986 / NIES-2087 / MED4), this protein is Putative pterin-4-alpha-carbinolamine dehydratase.